Here is a 215-residue protein sequence, read N- to C-terminus: Adenylate kinase (215 aa).

An ATP-binding site is contributed by 10-15 (GAGKGT). Residues 30–59 (STGDMFRAAMKNNTELGKKAKSFMDNGDLV) are NMP. Residues threonine 31, arginine 36, 57–59 (DLV), 85–88 (GFPR), and glutamine 92 each bind AMP. The tract at residues 126 to 163 (GRWICRTCGKTYHEIYNPPKVPGKCDLDGGELYQREDD) is LID. Arginine 127 lines the ATP pocket. Zn(2+) is bound by residues cysteine 130 and cysteine 133. 136 to 137 (TY) is an ATP binding site. The Zn(2+) site is built by cysteine 150 and aspartate 153. 2 residues coordinate AMP: arginine 160 and arginine 171. Glutamine 199 contributes to the ATP binding site.

The protein belongs to the adenylate kinase family. Monomer.

It is found in the cytoplasm. It catalyses the reaction AMP + ATP = 2 ADP. The protein operates within purine metabolism; AMP biosynthesis via salvage pathway; AMP from ADP: step 1/1. Functionally, catalyzes the reversible transfer of the terminal phosphate group between ATP and AMP. Plays an important role in cellular energy homeostasis and in adenine nucleotide metabolism. The protein is Adenylate kinase of Listeria innocua serovar 6a (strain ATCC BAA-680 / CLIP 11262).